The primary structure comprises 303 residues: Glycine--tRNA ligase alpha subunit (303 aa).

Belongs to the class-II aminoacyl-tRNA synthetase family. Tetramer of two alpha and two beta subunits.

Its subcellular location is the cytoplasm. It carries out the reaction tRNA(Gly) + glycine + ATP = glycyl-tRNA(Gly) + AMP + diphosphate. The protein is Glycine--tRNA ligase alpha subunit of Methylobacterium radiotolerans (strain ATCC 27329 / DSM 1819 / JCM 2831 / NBRC 15690 / NCIMB 10815 / 0-1).